We begin with the raw amino-acid sequence, 313 residues long: 4-hydroxyproline 2-epimerase (313 aa).

Residues 1–23 (MHVIDSHTGGEPTRVILSGGPHL) form a disordered region. The active-site Proton acceptor is Cys-85. Substrate contacts are provided by residues 86 to 87 (GH), His-205, and Asp-231. Cys-235 serves as the catalytic Proton donor. Residue 236-237 (GT) participates in substrate binding.

Belongs to the proline racemase family.

The enzyme catalyses trans-4-hydroxy-L-proline = cis-4-hydroxy-D-proline. Functionally, catalyzes the epimerization of trans-4-hydroxy-L-proline (t4LHyp) to cis-4-hydroxy-D-proline (c4DHyp). Is likely involved in a degradation pathway that converts t4LHyp to alpha-ketoglutarate. Displays no proline racemase activity. The sequence is that of 4-hydroxyproline 2-epimerase from Ruegeria pomeroyi (strain ATCC 700808 / DSM 15171 / DSS-3) (Silicibacter pomeroyi).